Reading from the N-terminus, the 108-residue chain is Parvalbumin beta (108 aa).

Position 1 is an N-acetylalanine (Ala1). EF-hand domains are found at residues 38–73 (KSNE…FSAG) and 77–108 (LTKT…LVKA). Ca(2+) is bound by residues Asp51, Asp53, Ser55, Phe57, Glu59, Glu62, Asp90, Asp92, Asp94, Lys96, and Glu101.

It belongs to the parvalbumin family.

In muscle, parvalbumin is thought to be involved in relaxation after contraction. It binds two calcium ions. The polypeptide is Parvalbumin beta (Latimeria chalumnae (Coelacanth)).